A 373-amino-acid polypeptide reads, in one-letter code: Quinolinate synthase (373 aa).

Iminosuccinate contacts are provided by H46 and S63. Residue C109 participates in [4Fe-4S] cluster binding. Residues Y142–N144 and S163 each bind iminosuccinate. C232 is a binding site for [4Fe-4S] cluster. Iminosuccinate-binding positions include H258–E260 and T275. Residue C324 coordinates [4Fe-4S] cluster.

It belongs to the quinolinate synthase family. Type 3 subfamily. The cofactor is [4Fe-4S] cluster.

The protein resides in the cytoplasm. It catalyses the reaction iminosuccinate + dihydroxyacetone phosphate = quinolinate + phosphate + 2 H2O + H(+). It functions in the pathway cofactor biosynthesis; NAD(+) biosynthesis; quinolinate from iminoaspartate: step 1/1. Catalyzes the condensation of iminoaspartate with dihydroxyacetone phosphate to form quinolinate. The chain is Quinolinate synthase from Acidobacterium capsulatum (strain ATCC 51196 / DSM 11244 / BCRC 80197 / JCM 7670 / NBRC 15755 / NCIMB 13165 / 161).